We begin with the raw amino-acid sequence, 321 residues long: MENQASLNSIQKTVWDGKLPLQITLASSESRTFDQTDPYLISCPRISYLPSLLPRLRSFFASSLIEPKSQPHEGWFSFEGVPLKWHLPIGLLYDLYAGADPASKGSRPDESEQIISSVGDTLPWRLTLHFSDWPDEELVRLDADGMVMHDAFINSVKEADFLRNGTAKGIMSLSKEDSSGLWEAVQDVDLPSFQRISNILLPAPNQPFRNVPIRFFLPLPPDSGSPSLKVVQSPLPPSIPASTANATQSTVLRGKPASQLQTIGSALHSLLPNLFPSRRTPVLAKPVLHGAAVPMSAPVEEVARSAAYGDGWVYIVVRMMG.

A Glycyl lysine isopeptide (Lys-Gly) (interchain with G-Cter in atg12) cross-link involves residue lysine 157.

Belongs to the ATG5 family. As to quaternary structure, conjugated with atg12. Post-translationally, conjugated to atg12; which is essential for autophagy.

The protein localises to the preautophagosomal structure membrane. Functionally, involved in cytoplasm to vacuole transport (Cvt) and autophagic vesicle formation. Autophagy is essential for maintenance of amino acid levels and protein synthesis under nitrogen starvation. Required for selective autophagic degradation of the nucleus (nucleophagy). Also required for mitophagy, which eliminates defective or superfluous mitochondria in order to fulfill cellular energy requirements and prevent excess ROS production. Conjugation with atg12, through a ubiquitin-like conjugating system involving atg7 as an E1-like activating enzyme and atg10 as an E2-like conjugating enzyme, is essential for its function. The atg12-atg5 conjugate acts as an E3-like enzyme which is required for lipidation of atg8 and atg8 association to the vesicle membranes. The chain is Autophagy protein 5 (atg5) from Aspergillus clavatus (strain ATCC 1007 / CBS 513.65 / DSM 816 / NCTC 3887 / NRRL 1 / QM 1276 / 107).